A 145-amino-acid chain; its full sequence is Protein SPMIP3 (145 aa).

The protein is Protein SPMIP3 of Mus musculus (Mouse).